The chain runs to 365 residues: G-protein coupled receptor 4 (365 aa).

The Extracellular portion of the chain corresponds to 1–10; that stretch reads MDNSTGTWEG. An N-linked (GlcNAc...) asparagine glycan is attached at Asn3. The chain crosses the membrane as a helical span at residues 11 to 47; sequence CHVDSRVDHLFPPSLYIFVIGVGLPTNCLALWAAYRQ. 2 disulfide bridges follow: Cys11–Cys260 and Cys92–Cys170. The Cytoplasmic portion of the chain corresponds to 48-51; that stretch reads VRQR. A helical membrane pass occupies residues 52–82; sequence NELGVYLMNLSIADLLYICTLPLWVDYFLHH. Topologically, residues 83–87 are extracellular; that stretch reads DNWIH. Residues 88–123 form a helical membrane-spanning segment; sequence GPGSCKLFGFIFYSNIYISIAFLCCISVDRYLAVAH. Over 124 to 131 the chain is Cytoplasmic; sequence PLRFARLR. A helical transmembrane segment spans residues 132–158; that stretch reads RVKTAVAVSSVVWATELGANSAPLFHD. Over 159–174 the chain is Extracellular; the sequence is ELFRDRYNHTFCFEKF. The segment at 159–174 is extracellular loop 2 (ECL2); sequence ELFRDRYNHTFCFEKF. The N-linked (GlcNAc...) asparagine glycan is linked to Asn166. The helical transmembrane segment at 175–212 threads the bilayer; sequence PMERWVAWMNLYRVFVGFLFPWALMLLCYRGILRAVQS. Residues 213-216 are Cytoplasmic-facing; that stretch reads SVST. The helical transmembrane segment at 217–252 threads the bilayer; it reads ERQEKVKIKRLALSLIAIVLVCFAPYHALLLSRSAV. The Extracellular portion of the chain corresponds to 253–262; that stretch reads YLGRPWDCGF. Residues 263-291 traverse the membrane as a helical segment; that stretch reads EERVFSAYHSSLAFTSLNCVADPILYCLV. Topologically, residues 292 to 365 are cytoplasmic; that stretch reads NEGARSDVAK…PLKVLLPPAQ (74 aa).

Belongs to the G-protein coupled receptor 1 family.

It is found in the cell membrane. Its activity is regulated as follows. Activated by a network of residues that connects an extracellular-facing cavity to Glu-147, a conserved charged residue buried in the transmembrane core of the receptor. Protonation likely drives conformational changes in extracellular loop 2 (ECL2), which stabilizes movement of transmembrane 3 (TM3) and a series of rearrangements that connect the extracellular-facing cavity to Glu-147, a residue only conserved in proton-sensing G-protein coupled receptors. Its function is as follows. Proton-sensing G-protein coupled receptor activated by extracellular pH, which is required to monitor pH changes and generate adaptive reactions. Activated by an optimal pH of 6.8-7.2. Ligand binding causes a conformation change that triggers signaling via guanine nucleotide-binding proteins (G proteins) and modulates the activity of downstream effectors, such as adenylate cyclase. GPR4 is mainly coupled to G(s) G proteins and mediates activation of adenylate cyclase activity. May also couple with G(q) and G(12)/G(13) G proteins. Acts as a key regulator of respiratory sensitivity to CO2/H(+) in brain retrotrapezoid nucleus neurons: acts by mediating detection of protons generated by the formation of carbonic acid in the blood, an important mechanism to impulse to breathe. Also acts as a regulator of acid secretion in the kidney collecting duct by maintaining acid-base homeostasis in the kidney. Acidosis-induced GPR4 activation increases paracellular gap formation and permeability of vascular endothelial cells, possibly through the G(12)/G(13)/Rho GTPase signaling pathway. This chain is G-protein coupled receptor 4, found in Rattus norvegicus (Rat).